Here is an 859-residue protein sequence, read N- to C-terminus: Low-density lipoprotein receptor-related protein 12 (859 aa).

Residues 1–32 (MARRWSTKESPRWRSALLLLFLAGVYGNGALA) form the signal peptide. Residues 33 to 492 (EHSENVHISG…ENCPVIVPTR (460 aa)) lie on the Extracellular side of the membrane. 2 disulfide bridges follow: Cys47–Cys76 and Cys103–Cys122. Residues 47 to 159 (CGETPEQIRA…KGFRLAYFSG (113 aa)) form the CUB 1 domain. Asn75 carries an N-linked (GlcNAc...) asparagine glycan. N-linked (GlcNAc...) asparagine glycosylation is present at Asn146. LDL-receptor class A domains follow at residues 165–201 (NCACDQFRCGNGKCIPEAWKCNNMDECGDSSDEEICA) and 214–255 (PCAY…IDCD). 7 cysteine pairs are disulfide-bonded: Cys166–Cys178, Cys173–Cys191, Cys185–Cys200, Cys215–Cys232, Cys222–Cys245, Cys239–Cys254, and Cys259–Cys285. The CUB 2 domain occupies 259-372 (CGQWLKYFYG…RGFNATYQVD (114 aa)). 2 N-linked (GlcNAc...) asparagine glycosylation sites follow: Asn284 and Asn366. 3 LDL-receptor class A domains span residues 374–411 (FCLPWEIPCGGNWGCYTEQQRCDGYWHCPNGRDEINCT), 412–449 (MCQKEEFPCSRNGVCYPRSDRCNYQNHCPNGSDEKNCF), and 450–486 (FCQPGNFHCKNNRCVFESWVCDSQDDCGDGSDEENCP). 9 disulfides stabilise this stretch: Cys375–Cys388, Cys382–Cys401, Cys395–Cys410, Cys413–Cys426, Cys420–Cys439, Cys433–Cys448, Cys451–Cys463, Cys458–Cys476, and Cys470–Cys485. An N-linked (GlcNAc...) asparagine glycan is attached at Asn409. Asn441 carries N-linked (GlcNAc...) asparagine glycosylation. A helical transmembrane segment spans residues 493 to 513 (VITAAVIGSLICGLLLVIALG). Topologically, residues 514-859 (CTCKLYSLRM…TSDDEALLLC (346 aa)) are cytoplasmic. Disordered regions lie at residues 623–678 (ADGD…LPQK), 693–723 (ASSSTQSTRGGHADNGRDVTSVEPPSVSPAR), 748–770 (SSVSQNQSPLRQLDNGVSGREDD), and 802–823 (QGQGLRQPYNATNPGVRPSNRD). Composition is skewed to polar residues over residues 748–757 (SSVSQNQSPL) and 802–814 (QGQGLRQPYNATN).

The protein belongs to the LDLR family. As to quaternary structure, may interact with RACK1, ZFYVE9 and NMRK2.

The protein localises to the membrane. It is found in the coated pit. Its function is as follows. Probable receptor, which may be involved in the internalization of lipophilic molecules and/or signal transduction. May act as a tumor suppressor. This chain is Low-density lipoprotein receptor-related protein 12 (LRP12), found in Pongo abelii (Sumatran orangutan).